A 97-amino-acid polypeptide reads, in one-letter code: AEVKLGADDGALVFSPSSFSVAKGEGISFKNNAGFPHNIVFDEDEVPAGVDVSKISQEDYLDGAGESFTVTLTEKGTYKFYCEPHAGAGMKGEVTVT.

Positions 1–97 (AEVKLGADDG…AGMKGEVTVT (97 aa)) constitute a Plastocyanin-like domain. Cu cation-binding residues include H37, C82, H85, and M90.

This sequence belongs to the plastocyanin family. Requires Cu(2+) as cofactor.

The protein resides in the plastid. Its subcellular location is the chloroplast thylakoid membrane. Its function is as follows. Participates in electron transfer between P700 and the cytochrome b6-f complex in photosystem I. This chain is Plastocyanin (PETE), found in Daucus carota (Wild carrot).